The primary structure comprises 234 residues: Ubiquinone biosynthesis O-methyltransferase (234 aa).

Residues R37, G56, D77, and M121 each coordinate S-adenosyl-L-methionine.

This sequence belongs to the methyltransferase superfamily. UbiG/COQ3 family.

It carries out the reaction a 3-demethylubiquinol + S-adenosyl-L-methionine = a ubiquinol + S-adenosyl-L-homocysteine + H(+). The catalysed reaction is a 3-(all-trans-polyprenyl)benzene-1,2-diol + S-adenosyl-L-methionine = a 2-methoxy-6-(all-trans-polyprenyl)phenol + S-adenosyl-L-homocysteine + H(+). Its pathway is cofactor biosynthesis; ubiquinone biosynthesis. O-methyltransferase that catalyzes the 2 O-methylation steps in the ubiquinone biosynthetic pathway. The polypeptide is Ubiquinone biosynthesis O-methyltransferase (Aromatoleum aromaticum (strain DSM 19018 / LMG 30748 / EbN1) (Azoarcus sp. (strain EbN1))).